Consider the following 375-residue polypeptide: 1-deoxy-D-xylulose 5-phosphate reductoisomerase (375 aa).

The NADPH site is built by Thr12, Gly13, Ser14, Ile15, Asn39, and Asn115. A 1-deoxy-D-xylulose 5-phosphate-binding site is contributed by Lys116. Position 117 (Glu117) interacts with NADPH. Asp141 is a binding site for Mn(2+). 1-deoxy-D-xylulose 5-phosphate contacts are provided by Ser142, Glu143, Ser163, and His186. Glu143 is a Mn(2+) binding site. Gly192 is an NADPH binding site. 1-deoxy-D-xylulose 5-phosphate is bound by residues Ser199, Asn204, Lys205, and Glu208. Mn(2+) is bound at residue Glu208.

The protein belongs to the DXR family. The cofactor is Mg(2+). It depends on Mn(2+) as a cofactor.

The enzyme catalyses 2-C-methyl-D-erythritol 4-phosphate + NADP(+) = 1-deoxy-D-xylulose 5-phosphate + NADPH + H(+). Its pathway is isoprenoid biosynthesis; isopentenyl diphosphate biosynthesis via DXP pathway; isopentenyl diphosphate from 1-deoxy-D-xylulose 5-phosphate: step 1/6. Catalyzes the NADPH-dependent rearrangement and reduction of 1-deoxy-D-xylulose-5-phosphate (DXP) to 2-C-methyl-D-erythritol 4-phosphate (MEP). This chain is 1-deoxy-D-xylulose 5-phosphate reductoisomerase, found in Thermotoga neapolitana (strain ATCC 49049 / DSM 4359 / NBRC 107923 / NS-E).